The sequence spans 640 residues: PTS system mannitol-specific EIICBA component (640 aa).

The PTS EIIC type-2 domain occupies 12–343 (LGRFLSAMIM…LKISNRNHYV (332 aa)). Helical transmembrane passes span 24–45 (ISVF…WCPN), 50–70 (KVLS…TGGY), 134–155 (SVGI…PMIE), 165–185 (VNLM…EPAK), 273–292 (LILG…GGLI), and 313–334 (VINL…CMLL). One can recognise a PTS EIIB type-2 domain in the interval 379–475 (RNIIFACDAG…YLVENNLDNN (97 aa)). C385 functions as the Phosphocysteine intermediate; for EIIB activity in the catalytic mechanism. A Phosphocysteine; by EIIA modification is found at C385. In terms of domain architecture, PTS EIIA type-2 spans 496–638 (FSLTKENIFL…DDVLYLFSRK (143 aa)). The active-site Tele-phosphohistidine intermediate; for EIIA activity is the H556. The residue at position 556 (H556) is a Phosphohistidine; by HPr.

In terms of assembly, homodimer. In terms of processing, an intramolecular phosphotransfer takes places between His-556 and Cys-385.

The protein localises to the cell inner membrane. It carries out the reaction D-mannitol(out) + N(pros)-phospho-L-histidyl-[protein] = D-mannitol 1-phosphate(in) + L-histidyl-[protein]. Its function is as follows. The phosphoenolpyruvate-dependent sugar phosphotransferase system (sugar PTS), a major carbohydrate active transport system, catalyzes the phosphorylation of incoming sugar substrates concomitantly with their translocation across the cell membrane. This system is involved in D-mannitol transport. The chain is PTS system mannitol-specific EIICBA component (mtlA) from Buchnera aphidicola subsp. Baizongia pistaciae (strain Bp).